A 932-amino-acid polypeptide reads, in one-letter code: Protocadherin gamma-A6 (932 aa).

Residues 1–29 (MAPPQRHPQRSEQVLLLTLLGTLWGAAAA) form the signal peptide. 6 Cadherin domains span residues 30–133 (QIRY…TPRF), 134–242 (LKEE…TPMF), 243–347 (TQPV…VPEV), 348–452 (VVTS…PPTF), 453–562 (PHSS…APEI), and 570–682 (DGST…EPSA). Over 30–692 (QIRYSIPEEL…KPNDSDLTLY (663 aa)) the chain is Extracellular. Asn81 carries an N-linked (GlcNAc...) asparagine glycan. Asn419 and Asn545 each carry an N-linked (GlcNAc...) asparagine glycan. N-linked (GlcNAc...) asparagine glycosylation occurs at Asn685. A helical transmembrane segment spans residues 693–713 (LVVAVAAVSCVFLAFVIVLLA). At 714 to 932 (LRLQRWHKSR…KKKSGKKEKK (219 aa)) the chain is on the cytoplasmic side. 2 disordered regions span residues 804-841 (PRQLQQAPPNTDWRFSQAQRPGTSGSQNGDDTGTWPNN) and 902-932 (ATLTNAAGKRDGKAPAGGNGNKKKSGKKEKK). Over residues 806 to 841 (QLQQAPPNTDWRFSQAQRPGTSGSQNGDDTGTWPNN) the composition is skewed to polar residues. Positions 922 to 932 (NKKKSGKKEKK) are enriched in basic residues.

Its subcellular location is the cell membrane. In terms of biological role, potential calcium-dependent cell-adhesion protein. May be involved in the establishment and maintenance of specific neuronal connections in the brain. The protein is Protocadherin gamma-A6 (PCDHGA6) of Homo sapiens (Human).